The primary structure comprises 411 residues: Lissencephaly-1 homolog (411 aa).

Residues 9-41 (QREELNQAIADYLGSNGYADSLETFRKEADLST) form the LisH domain. Positions 56–83 (TSVIRLQKKVMELEAKLTEAEKEVIEGA) form a coiled coil. 7 WD repeats span residues 106 to 147 (GHRA…RSLK), 148 to 187 (GHTD…ECIK), 191 to 230 (GHDH…CVKT), 233 to 272 (GHRE…CKVE), 275 to 334 (DHEH…CLLT), 337 to 376 (GHDN…CMKT), and 379 to 411 (AHQH…WECR).

Belongs to the WD repeat LIS1/nudF family.

It localises to the cytoplasm. Its subcellular location is the cytoskeleton. The protein resides in the microtubule organizing center. It is found in the centrosome. Its function is as follows. Positively regulates the activity of the minus-end directed microtubule motor protein dynein. May enhance dynein-mediated microtubule sliding by targeting dynein to the microtubule plus end. Required for several dynein- and microtubule-dependent processes. This is Lissencephaly-1 homolog from Drosophila sechellia (Fruit fly).